We begin with the raw amino-acid sequence, 263 residues long: MECKTVFLNGDFLKNSVNVNLNRLATVETLLRHVLGDSYETVLERAYLTHQSRIVHPDIQLCKLEGKSTSAHLNLTLCTRVLGGKGGFGSQLRAAGGRMSKKRNEQENQDSCRDLDGNRLGTIRQAKELSEYLAKKPAETRAKKEAKKQKLNKVLAADSSSSRFDDHEYLEDLEQSVSNVRDAFQNSLLYRRGSTSASSFSSGSNGATTDEPAEKEARNNNSSINSWSRRMQASESSNEAEGEDSESQTSKSLYEWDDPLYGL.

The propeptide at 1 to 84 (MECKTVFLNG…LTLCTRVLGG (84 aa)) is UBL. Disordered regions lie at residues 95–118 (AGGR…LDGN), 137–158 (PAET…LAAD), and 194–263 (STSA…LYGL). Residues 102-117 (KRNEQENQDSCRDLDG) show a composition bias toward basic and acidic residues. 2 stretches are compositionally biased toward low complexity: residues 194-209 (STSA…GATT) and 219-230 (NNNSSINSWSRR).

It belongs to the SDE2 family. Interacts with cay1/cactin. Interacts with prp19. Interacts with cwf12. Interacts with cdc5. The N-terminal UBL (ubiquitin-like) propeptide is cleaved at Gly-84 by the deubiquitinating enzymes ubp5 and ubp15; the resulting mature sde2 associates with spliceosomes. In terms of processing, polyubiquitinated; ubiquitination is partially dependent on ubr11.

It is found in the cytoplasm. Its subcellular location is the nucleus. Functionally, plays a role in pre-mRNA splicing by facilitating excision of introns featuring relatively long (&gt;21 nucleotides) spacing between the branchpoint and 3'-splice site (ss). Recruits cactin to the spliceosome which may enable folding of RNA between the branchpoint and 3'-ss, to guide the splice site towards the spliceosome's catalytic center. Required for proper chromatin organization by assisting splicing of components involved in genomic stability and telomere organization. The polypeptide is Splicing regulator sde2 (Schizosaccharomyces pombe (strain 972 / ATCC 24843) (Fission yeast)).